We begin with the raw amino-acid sequence, 151 residues long: Protein ECM12 (151 aa).

N-linked (GlcNAc...) asparagine glycosylation occurs at Asn2. The next 2 helical transmembrane spans lie at 17–37 and 51–71; these read LLVF…IFFF and AFLA…VGFF. Asn132 and Asn137 each carry an N-linked (GlcNAc...) asparagine glycan.

It is found in the membrane. Its function is as follows. May be involved in cell wall organization and biogenesis. This is Protein ECM12 (ECM12) from Saccharomyces cerevisiae (strain ATCC 204508 / S288c) (Baker's yeast).